The primary structure comprises 129 residues: Lysozyme C-3 (129 aa).

Residues 1-129 form the C-type lysozyme domain; that stretch reads KVYERCELAA…VSRWIRGCRL (129 aa). Intrachain disulfides connect Cys-6–Cys-127, Cys-30–Cys-115, Cys-64–Cys-80, and Cys-76–Cys-94. Residues Glu-35 and Asp-52 contribute to the active site.

Belongs to the glycosyl hydrolase 22 family.

The protein resides in the secreted. It carries out the reaction Hydrolysis of (1-&gt;4)-beta-linkages between N-acetylmuramic acid and N-acetyl-D-glucosamine residues in a peptidoglycan and between N-acetyl-D-glucosamine residues in chitodextrins.. Functionally, lysozymes have primarily a bacteriolytic function; those in tissues and body fluids are associated with the monocyte-macrophage system and enhance the activity of immunoagents. This is Lysozyme C-3 from Anas platyrhynchos (Mallard).